We begin with the raw amino-acid sequence, 362 residues long: MSTPLSLQALAKKILATQHISKNHYFILKYCGLWWHGAPIMFSTNEDNQLMIKSAIFKDGLELNLALMKAVQENNYDLIELFTEWGADINSSLVTVNTEHTWNFCRELGAKILNEMDIVQIFYKIHRIKTSSNIILCHKLLSNNPLFQNIEELKIIICCFLEKISINFILNEITLNEMLARLWYSMAVRYHLTEAIQYFYQRYRHFKDWRLICGLSFNNVSDLHEIYHIKKVDMNIDEMMYLACMRDSNFLTIFYCFVLGANINRAMVTSVKNFYTNNLFFCIDLGANAFEESLELAKQKNHDILVEILSFKDFYNSNVSLLSLKTTDPEKINALLKNYRSKNIMRYKKLCPKIIRWARFII.

This sequence belongs to the asfivirus MGF 360 family.

Functionally, plays a role in virus cell tropism, and may be required for efficient virus replication in macrophages. The chain is Protein MGF 360-2L from African swine fever virus (strain Badajoz 1971 Vero-adapted) (Ba71V).